The sequence spans 144 residues: Large ribosomal subunit protein uL15 (144 aa).

Residues 1–48 (MQLNNLKPAAGSKHAKRRVGRGIGSGLGKTAGRGHKGQKSRSGGFHKV) are disordered. The span at 21–31 (RGIGSGLGKTA) shows a compositional bias: gly residues.

Belongs to the universal ribosomal protein uL15 family. Part of the 50S ribosomal subunit.

In terms of biological role, binds to the 23S rRNA. The sequence is that of Large ribosomal subunit protein uL15 from Cupriavidus pinatubonensis (strain JMP 134 / LMG 1197) (Cupriavidus necator (strain JMP 134)).